The following is a 407-amino-acid chain: Imidazolonepropionase (407 aa).

His74 and His76 together coordinate Fe(3+). Zn(2+)-binding residues include His74 and His76. Arg83, Tyr146, and His179 together coordinate 4-imidazolone-5-propanoate. Tyr146 serves as a coordination point for N-formimidoyl-L-glutamate. His244 contacts Fe(3+). His244 contacts Zn(2+). Gln247 contributes to the 4-imidazolone-5-propanoate binding site. Asp319 is a Fe(3+) binding site. A Zn(2+)-binding site is contributed by Asp319. Residues Asn321 and Gly323 each coordinate N-formimidoyl-L-glutamate. Thr324 is a binding site for 4-imidazolone-5-propanoate.

It belongs to the metallo-dependent hydrolases superfamily. HutI family. Zn(2+) serves as cofactor. The cofactor is Fe(3+).

The protein localises to the cytoplasm. It carries out the reaction 4-imidazolone-5-propanoate + H2O = N-formimidoyl-L-glutamate. Its pathway is amino-acid degradation; L-histidine degradation into L-glutamate; N-formimidoyl-L-glutamate from L-histidine: step 3/3. Functionally, catalyzes the hydrolytic cleavage of the carbon-nitrogen bond in imidazolone-5-propanoate to yield N-formimidoyl-L-glutamate. It is the third step in the universal histidine degradation pathway. The chain is Imidazolonepropionase from Salmonella typhi.